A 333-amino-acid polypeptide reads, in one-letter code: Adenosine deaminase (333 aa).

Zn(2+)-binding residues include His-12 and His-14. Residues His-14, Asp-16, and Gly-170 each contribute to the substrate site. Residue His-197 coordinates Zn(2+). Residue Glu-200 is the Proton donor of the active site. Zn(2+) is bound at residue Asp-278. A substrate-binding site is contributed by Asp-279.

This sequence belongs to the metallo-dependent hydrolases superfamily. Adenosine and AMP deaminases family. Adenosine deaminase subfamily. Zn(2+) serves as cofactor.

The catalysed reaction is adenosine + H2O + H(+) = inosine + NH4(+). The enzyme catalyses 2'-deoxyadenosine + H2O + H(+) = 2'-deoxyinosine + NH4(+). In terms of biological role, catalyzes the hydrolytic deamination of adenosine and 2-deoxyadenosine. The sequence is that of Adenosine deaminase from Escherichia coli O7:K1 (strain IAI39 / ExPEC).